Consider the following 434-residue polypeptide: Indole diterpene prenyltransferase nodD2 (434 aa).

L-tryptophan is bound by residues Leu85 to Ile86 and Glu94. The substrate site is built by Arg107, Lys194, Arg268, Lys270, Tyr272, Gln351, Tyr353, Tyr418, and Tyr422.

This sequence belongs to the tryptophan dimethylallyltransferase family.

Its pathway is secondary metabolite biosynthesis. Functionally, indole diterpene prenyltransferase; part of the gene cluster that mediates the biosynthesis of the indole diterpenes nodulisporic acids (NA). Nodulisporic acid A (NAA) and its chemically modified derivatives are of particular significance because of their highly potent insecticidal activity against blood-feeding arthropods and lack of observable adverse effects on mammals, in particular the tremogenicity associated with the paspaline-derived IDTs is not observed. The geranylgeranyl diphosphate (GGPP) synthase ggs1, localized outside of the cluster, is proposed to catalyze the first step in nodulisporic acid biosynthesis via conversion of farnesyl pyrophosphate and isopentyl pyrophosphate into geranylgeranyl pyrophosphate (GGPP). Condensation of indole-3-glycerol phosphate with GGPP by the prenyl transferase nodC then forms 3-geranylgeranylindole (3-GGI). Epoxidation by the FAD-dependent monooxygenase nodM leads to a single-epoxidized-GGI that is substrate of the terpene cyclase nodB for cyclization to yield emindole SB. The terminal methyl carbon, C28, of emindole SB is then oxidized by the cytochrome P450 monooxygenase nodW to produce nodulisporic acid F (NAF), the pentacyclic core of NAA. NAF is converted to nodulisporic acid E (NAE) via prenylation. This step is probably performed by one of the indole diterpene prenyltransferases nodD1 or nodD2. Several oxidation steps performed by the FAD-linked oxidoreductase nodO and one of the cytochrome P450 monooxygenase nodR, nodX or nodZ further convert NAE to nodulisporic acid D (NAD). NAD is substrate of cytochrome P450 monooxygenase nodJ to produce the precursor of nodulisporic acid C (NAC), converted to NAC by one of the indole diterpene prenyltransferases nodD1 or nodD2. The FAD-dependent monooxygenase nodY2 then oxidizes NAC to nodulisporic acid B (NAB). Finally NAB is converted to NAA by one of the cytochrome P450 monooxygenases nodR, nodX or nodZ. The protein is Indole diterpene prenyltransferase nodD2 of Hypoxylon pulicicidum.